The chain runs to 345 residues: Gibberellin 2-beta-dioxygenase 2 (345 aa).

The Fe2OG dioxygenase domain occupies His-170–Pro-285. 3 residues coordinate Fe cation: His-209, Asp-211, and His-266. Arg-276 is a catalytic residue.

Belongs to the iron/ascorbate-dependent oxidoreductase family. GA2OX subfamily. Requires Fe cation as cofactor. In terms of tissue distribution, predominantly expressed in leaves.

It catalyses the reaction gibberellin A1 + 2-oxoglutarate + O2 = gibberellin A8 + succinate + CO2. It participates in plant hormone biosynthesis; gibberellin biosynthesis. In terms of biological role, catalyzes the 2-beta-hydroxylation of several biologically active gibberellins, leading to the homeostatic regulation of their endogenous level. Catabolism of gibberellins (GAs) plays a central role in plant development. Converts GA9/GA20 to GA51/GA29 and GA4/GA1 to GA34/GA8. The chain is Gibberellin 2-beta-dioxygenase 2 (GA2OX2) from Pisum sativum (Garden pea).